Reading from the N-terminus, the 417-residue chain is D-amino acid dehydrogenase (417 aa).

FAD is bound at residue 3–17 (VIVLGSGVIGVTAAW).

It belongs to the DadA oxidoreductase family. It depends on FAD as a cofactor.

It carries out the reaction a D-alpha-amino acid + A + H2O = a 2-oxocarboxylate + AH2 + NH4(+). The protein operates within amino-acid degradation; D-alanine degradation; NH(3) and pyruvate from D-alanine: step 1/1. In terms of biological role, oxidative deamination of D-amino acids. This Methylobacillus flagellatus (strain ATCC 51484 / DSM 6875 / VKM B-1610 / KT) protein is D-amino acid dehydrogenase.